The chain runs to 126 residues: Holo-[acyl-carrier-protein] synthase (126 aa).

2 residues coordinate Mg(2+): D8 and E60.

It belongs to the P-Pant transferase superfamily. AcpS family. Mg(2+) is required as a cofactor.

The protein localises to the cytoplasm. The catalysed reaction is apo-[ACP] + CoA = holo-[ACP] + adenosine 3',5'-bisphosphate + H(+). Its function is as follows. Transfers the 4'-phosphopantetheine moiety from coenzyme A to a Ser of acyl-carrier-protein. This chain is Holo-[acyl-carrier-protein] synthase, found in Ehrlichia canis (strain Jake).